The chain runs to 316 residues: Melanocyte-stimulating hormone receptor (316 aa).

The Extracellular portion of the chain corresponds to Met-1 to Glu-37. N-linked (GlcNAc...) asparagine glycosylation occurs at Asn-29. Residues Val-38 to Ile-63 form a helical membrane-spanning segment. At Ala-64–Pro-72 the chain is on the cytoplasmic side. Residues Met-73–Leu-93 traverse the membrane as a helical segment. At Glu-94–Asn-118 the chain is on the extracellular side. A helical membrane pass occupies residues Thr-119 to Val-140. Topologically, residues Asp-141–Arg-163 are cytoplasmic. Residues Val-164 to Tyr-183 traverse the membrane as a helical segment. The Extracellular portion of the chain corresponds to Glu-184–Cys-191. A helical membrane pass occupies residues Leu-192–Leu-210. At Ala-211–Ala-239 the chain is on the cytoplasmic side. Residues Ala-240–Phe-265 form a helical membrane-spanning segment. At Cys-266 to Asn-278 the chain is on the extracellular side. Residues Phe-279–Phe-299 traverse the membrane as a helical segment. Residues Arg-300–Trp-316 lie on the Cytoplasmic side of the membrane. Cys-314 carries the S-palmitoyl cysteine lipid modification.

The protein belongs to the G-protein coupled receptor 1 family. Interacts with MGRN1, but does not undergo MGRN1-mediated ubiquitination; this interaction competes with GNAS-binding and thus inhibits agonist-induced cAMP production. Interacts with OPN3; the interaction results in a decrease in MC1R-mediated cAMP signaling and ultimately a decrease in melanin production in melanocytes.

The protein localises to the cell membrane. Receptor for MSH (alpha, beta and gamma) and ACTH. The activity of this receptor is mediated by G proteins which activate adenylate cyclase. Mediates melanogenesis, the production of eumelanin (black/brown) and phaeomelanin (red/yellow), via regulation of cAMP signaling in melanocytes. This Cebus albifrons (White-fronted capuchin) protein is Melanocyte-stimulating hormone receptor (MC1R).